We begin with the raw amino-acid sequence, 219 residues long: Arginine transport system permease protein ArtQ (219 aa).

The next 5 helical transmembrane spans lie at 19-39 (LAITLKIVVVSAIIGLILGIV), 51-73 (FIWIADFYTSVFRGTPLVLQLMI), 88-108 (QFWAAVVALSLNSAAYVSEII), 149-169 (AIVNELITLTKESAIVTVIGL), and 187-207 (LEPLIIAGLIYYVLVLILTFI). The ABC transmembrane type-1 domain maps to 19–208 (LAITLKIVVV…VLVLILTFIG (190 aa)).

The protein belongs to the binding-protein-dependent transport system permease family. HisMQ subfamily.

The protein resides in the cell membrane. In terms of biological role, part of a binding-protein-dependent transport system for arginine. Probably responsible for the translocation of the substrate across the membrane. The polypeptide is Arginine transport system permease protein ArtQ (artQ) (Bacillus subtilis (strain 168)).